Reading from the N-terminus, the 534-residue chain is Prolyl 4-hydroxylase subunit alpha-1 (534 aa).

A signal peptide spans 1–17; the sequence is MIWYILIIGILLPQSLA. N-linked (GlcNAc...) asparagine glycosylation occurs at Asn-113. The stretch at 205–238 is one TPR repeat; the sequence is VSVLDYLSYAVYQQGDLDKALLLTKKLLELDPEH. N-linked (GlcNAc...) asparagine glycosylation occurs at Asn-259. The Fe2OG dioxygenase domain occupies 411 to 519; that stretch reads TAEELQVANY…KWVSNKWLHE (109 aa). Fe cation is bound by residues His-429, Asp-431, and His-500. Lys-510 is a binding site for 2-oxoglutarate.

The protein belongs to the P4HA family. As to quaternary structure, heterotetramer of two alpha-1 chains and two beta chains (P4HB)(the beta chain is the multi-functional PDI), where P4HB plays the role of a structural subunit; this tetramer catalyzes the formation of 4-hydroxyproline in collagen. It depends on Fe(2+) as a cofactor. Requires L-ascorbate as cofactor. As to expression, expressed in the heart, liver, skeletal muscle, kidney, placenta, lung and pancreas.

The protein resides in the endoplasmic reticulum lumen. The enzyme catalyses L-prolyl-[collagen] + 2-oxoglutarate + O2 = trans-4-hydroxy-L-prolyl-[collagen] + succinate + CO2. Its activity is regulated as follows. Inhibited by poly(L-proline). In terms of biological role, catalyzes the post-translational formation of 4-hydroxyproline in -Xaa-Pro-Gly- sequences in collagens and other proteins. The polypeptide is Prolyl 4-hydroxylase subunit alpha-1 (P4HA1) (Homo sapiens (Human)).